The sequence spans 216 residues: Ras-related protein Rab-5C (216 aa).

The GTP site is built by S30, A31, G33, K34, S35, S36, H47, E48, T53, and G79. Mg(2+) is bound at residue S35. 2 consecutive short sequence motifs (switch) follow at residues 45–57 (QFHEYQESTIGAA) and 78–94 (AGQERYHSLAPMYYRGA). T53 serves as a coordination point for Mg(2+). Residue S85 is modified to Phosphoserine; by LRRK2. GTP is bound by residues N134, K135, D137, A165, and K166. The disordered stretch occupies residues 185–216 (NEPQNATGAPGRNRGVDLQENNPASRSQCCSN). Over residues 203-216 (QENNPASRSQCCSN) the composition is skewed to polar residues. 2 S-geranylgeranyl cysteine lipidation sites follow: C213 and C214.

It belongs to the small GTPase superfamily. Rab family. In terms of assembly, interacts with EEA1. Interacts with INCA1. Interacts with GDI1, GDI2, CHML and CHM; phosphorylation at Ser-85 disrupts this interaction. The cofactor is Mg(2+). Phosphorylation of Ser-85 in the switch II region by LRRK2 prevents the association of RAB regulatory proteins, including CHM, CHML and RAB GDP dissociation inhibitors GDI1 and GDI2. In terms of processing, (Microbial infection) Glycosylated on arginine residues by S.typhimurium protein Ssek3.

It is found in the cell membrane. It localises to the early endosome membrane. The protein resides in the melanosome. It catalyses the reaction GTP + H2O = GDP + phosphate + H(+). Regulated by guanine nucleotide exchange factors (GEFs) which promote the exchange of bound GDP for free GTP. Regulated by GTPase activating proteins (GAPs) which increase the GTP hydrolysis activity. Inhibited by GDP dissociation inhibitors (GDIs). Its function is as follows. The small GTPases Rab are key regulators of intracellular membrane trafficking, from the formation of transport vesicles to their fusion with membranes. Rabs cycle between an inactive GDP-bound form and an active GTP-bound form that is able to recruit to membranes different sets of downstream effectors directly responsible for vesicle formation, movement, tethering and fusion. The polypeptide is Ras-related protein Rab-5C (Homo sapiens (Human)).